Reading from the N-terminus, the 508-residue chain is Photosystem II CP47 reaction center protein (508 aa).

6 helical membrane passes run 21 to 36 (SVHI…WAGS), 101 to 115 (IILA…MWHW), 140 to 156 (GIHL…FGAF), 203 to 218 (IAAG…FHLS), 237 to 252 (VLSS…AFVV), and 457 to 472 (CFAL…HGAR).

This sequence belongs to the PsbB/PsbC family. PsbB subfamily. As to quaternary structure, PSII is composed of 1 copy each of membrane proteins PsbA, PsbB, PsbC, PsbD, PsbE, PsbF, PsbH, PsbI, PsbJ, PsbK, PsbL, PsbM, PsbT, PsbX, PsbY, PsbZ, Psb30/Ycf12, at least 3 peripheral proteins of the oxygen-evolving complex and a large number of cofactors. It forms dimeric complexes. Requires Binds multiple chlorophylls. PSII binds additional chlorophylls, carotenoids and specific lipids. as cofactor.

It is found in the plastid. The protein localises to the chloroplast thylakoid membrane. Its function is as follows. One of the components of the core complex of photosystem II (PSII). It binds chlorophyll and helps catalyze the primary light-induced photochemical processes of PSII. PSII is a light-driven water:plastoquinone oxidoreductase, using light energy to abstract electrons from H(2)O, generating O(2) and a proton gradient subsequently used for ATP formation. The sequence is that of Photosystem II CP47 reaction center protein from Mesostigma viride (Green alga).